A 220-amino-acid chain; its full sequence is Large ribosomal subunit protein uL3 (220 aa).

Positions 132–153 are disordered; it reads SGRASHGNSRSHNVPGSIGMAQ. Residues 133 to 145 are compositionally biased toward polar residues; it reads GRASHGNSRSHNV. Glutamine 153 is modified (N5-methylglutamine).

Belongs to the universal ribosomal protein uL3 family. As to quaternary structure, part of the 50S ribosomal subunit. Forms a cluster with proteins L14 and L19. Methylated by PrmB.

Its function is as follows. One of the primary rRNA binding proteins, it binds directly near the 3'-end of the 23S rRNA, where it nucleates assembly of the 50S subunit. This chain is Large ribosomal subunit protein uL3, found in Ralstonia nicotianae (strain ATCC BAA-1114 / GMI1000) (Ralstonia solanacearum).